A 98-amino-acid polypeptide reads, in one-letter code: NADH-ubiquinone oxidoreductase chain 4L (98 aa).

The next 3 helical transmembrane spans lie at 2 to 22 (MMAVLNISLAFIFSLLGTLMF), 26 to 46 (LMSTLLCLEGMMLTLFIITTI), and 59 to 79 (IPIVILVFAACEAAVGLALLV).

Belongs to the complex I subunit 4L family. In terms of assembly, core subunit of respiratory chain NADH dehydrogenase (Complex I) which is composed of 45 different subunits.

It localises to the mitochondrion inner membrane. It carries out the reaction a ubiquinone + NADH + 5 H(+)(in) = a ubiquinol + NAD(+) + 4 H(+)(out). Functionally, core subunit of the mitochondrial membrane respiratory chain NADH dehydrogenase (Complex I) which catalyzes electron transfer from NADH through the respiratory chain, using ubiquinone as an electron acceptor. Part of the enzyme membrane arm which is embedded in the lipid bilayer and involved in proton translocation. This chain is NADH-ubiquinone oxidoreductase chain 4L (MT-ND4L), found in Phodopus sungorus (Striped hairy-footed hamster).